Here is a 384-residue protein sequence, read N- to C-terminus: GTPase Obg (384 aa).

In terms of domain architecture, Obg spans 1 to 159 (MKFIDEAKIE…RSLQLELKVL (159 aa)). Disordered stretches follow at residues 20–46 (ATSF…GSVW) and 129–149 (HFKS…EGET). Positions 33 to 43 (GPDGGDGGKGG) are enriched in gly residues. A compositionally biased stretch (polar residues) spans 130–143 (FKSSVNRAPKQSTP). Positions 160-348 (ADVGLLGMPN…LVHQINQYLA (189 aa)) constitute an OBG-type G domain. GTP-binding positions include 166–173 (GMPNAGKS), 191–195 (FTTLH), 213–216 (DIPG), 284–287 (NKLD), and 329–331 (SAL). Ser173 and Thr193 together coordinate Mg(2+).

The protein belongs to the TRAFAC class OBG-HflX-like GTPase superfamily. OBG GTPase family. In terms of assembly, monomer. Mg(2+) is required as a cofactor.

The protein resides in the cytoplasm. Functionally, an essential GTPase which binds GTP, GDP and possibly (p)ppGpp with moderate affinity, with high nucleotide exchange rates and a fairly low GTP hydrolysis rate; the half-life of the GTP-bound state is about 50 minutes. Plays a role in control of the cell cycle, stress response, ribosome biogenesis and in those bacteria that undergo differentiation, in morphogenesis control. The chain is GTPase Obg from Neisseria gonorrhoeae (strain ATCC 700825 / FA 1090).